The following is a 382-amino-acid chain: 4-hydroxy-3-methylbut-2-en-1-yl diphosphate synthase (flavodoxin) (382 aa).

C273, C276, C308, and E315 together coordinate [4Fe-4S] cluster.

It belongs to the IspG family. The cofactor is [4Fe-4S] cluster.

It catalyses the reaction (2E)-4-hydroxy-3-methylbut-2-enyl diphosphate + oxidized [flavodoxin] + H2O + 2 H(+) = 2-C-methyl-D-erythritol 2,4-cyclic diphosphate + reduced [flavodoxin]. Its pathway is isoprenoid biosynthesis; isopentenyl diphosphate biosynthesis via DXP pathway; isopentenyl diphosphate from 1-deoxy-D-xylulose 5-phosphate: step 5/6. Converts 2C-methyl-D-erythritol 2,4-cyclodiphosphate (ME-2,4cPP) into 1-hydroxy-2-methyl-2-(E)-butenyl 4-diphosphate. The sequence is that of 4-hydroxy-3-methylbut-2-en-1-yl diphosphate synthase (flavodoxin) from Gluconacetobacter diazotrophicus (strain ATCC 49037 / DSM 5601 / CCUG 37298 / CIP 103539 / LMG 7603 / PAl5).